Reading from the N-terminus, the 306-residue chain is Ornithine carbamoyltransferase (306 aa).

Residues 51-54, Gln78, Arg102, and 129-132 each bind carbamoyl phosphate; these read STRT and HPCQ. Residues Asn160, Asp223, and 227–228 contribute to the L-ornithine site; that span reads SM. Carbamoyl phosphate is bound by residues 263-264 and Arg291; that span reads CL.

Belongs to the aspartate/ornithine carbamoyltransferase superfamily. OTCase family.

Its subcellular location is the cytoplasm. It catalyses the reaction carbamoyl phosphate + L-ornithine = L-citrulline + phosphate + H(+). Its pathway is amino-acid biosynthesis; L-arginine biosynthesis; L-arginine from L-ornithine and carbamoyl phosphate: step 1/3. Reversibly catalyzes the transfer of the carbamoyl group from carbamoyl phosphate (CP) to the N(epsilon) atom of ornithine (ORN) to produce L-citrulline. This chain is Ornithine carbamoyltransferase (argF), found in Nostoc punctiforme (strain ATCC 29133 / PCC 73102).